The chain runs to 460 residues: Probable lipase C14C8.15 (460 aa).

Residues 1–16 lie on the Cytoplasmic side of the membrane; the sequence is MTLNGNIMKYCLEKGE. A helical; Signal-anchor for type II membrane protein membrane pass occupies residues 17–37; the sequence is ILISFLLIALESMFRICTVIL. The Lumenal segment spans residues 38 to 460; sequence PSPLRNWFYE…LVDGVMNHTI (423 aa). S214 (nucleophile) is an active-site residue. N-linked (GlcNAc...) asparagine glycosylation is present at N308. Catalysis depends on charge relay system residues D382 and H408. A glycan (N-linked (GlcNAc...) asparagine) is linked at N457.

Belongs to the AB hydrolase superfamily. Lipase family.

The protein localises to the golgi apparatus. It is found in the membrane. Functionally, probable lipase. The sequence is that of Probable lipase C14C8.15 from Schizosaccharomyces pombe (strain 972 / ATCC 24843) (Fission yeast).